The following is a 101-amino-acid chain: Apolipoprotein C-II (101 aa).

Residues 1-22 form the signal peptide; that stretch reads MGIRYLLVLVLVLLVLGCEVQG. The tract at residues 66-74 is lipid binding; that stretch reads TMDEKIREI. The tract at residues 78-101 is lipoprotein lipase cofactor; the sequence is STAAVSTYAGIFTDQLLSMLKGDQ.

This sequence belongs to the apolipoprotein C2 family. In terms of processing, proapolipoprotein C-II is synthesized as a sialic acid containing glycoprotein which is subsequently desialylated prior to its proteolytic processing. Proapolipoprotein C-II, the major form found in plasma undergoes proteolytic cleavage of its N-terminal hexapeptide to generate apolipoprotein C-II, which occurs as the minor form in plasma.

It localises to the secreted. Its function is as follows. Component of chylomicrons, very low-density lipoproteins (VLDL), low-density lipoproteins (LDL), and high-density lipoproteins (HDL) in plasma. Plays an important role in lipoprotein metabolism as an activator of lipoprotein lipase. Both proapolipoprotein C-II and apolipoprotein C-II can activate lipoprotein lipase. The protein is Apolipoprotein C-II (APOC2) of Leptonychotes weddellii (Weddell seal).